Here is a 108-residue protein sequence, read N- to C-terminus: Nucleoid-associated protein Lcho_1975 (108 aa).

The protein belongs to the YbaB/EbfC family. As to quaternary structure, homodimer.

It is found in the cytoplasm. Its subcellular location is the nucleoid. Its function is as follows. Binds to DNA and alters its conformation. May be involved in regulation of gene expression, nucleoid organization and DNA protection. The polypeptide is Nucleoid-associated protein Lcho_1975 (Leptothrix cholodnii (strain ATCC 51168 / LMG 8142 / SP-6) (Leptothrix discophora (strain SP-6))).